Consider the following 101-residue polypeptide: MFAIIETGGKQIIVKAGDTIFIEKIEGKEGDKVSFDKVLAINDKIGTPYLENAAVLAAIEKQGKAKKIVVYRHNAKSTHKRKLGHRQPYTRVKILEIKEAK.

It belongs to the bacterial ribosomal protein bL21 family. As to quaternary structure, part of the 50S ribosomal subunit. Contacts protein L20.

In terms of biological role, this protein binds to 23S rRNA in the presence of protein L20. This Metamycoplasma arthritidis (strain 158L3-1) (Mycoplasma arthritidis) protein is Large ribosomal subunit protein bL21.